The sequence spans 720 residues: Putative fatty acid oxidation complex trifunctional enzyme (720 aa).

The interval 1–384 (MQNEIKKVCV…SWKYGPFELL (384 aa)) is 3-hydroxyacyl-CoA dehydrogenase. The tract at residues 453–720 (FVITTKMNCL…TIEKLKAIVK (268 aa)) is enoyl-CoA hydratase/isomerase.

It in the N-terminal section; belongs to the 3-hydroxyacyl-CoA dehydrogenase family. This sequence in the C-terminal section; belongs to the enoyl-CoA hydratase/isomerase family.

The enzyme catalyses a (3S)-3-hydroxyacyl-CoA + NAD(+) = a 3-oxoacyl-CoA + NADH + H(+). The catalysed reaction is a (3S)-3-hydroxyacyl-CoA = a (2E)-enoyl-CoA + H2O. It carries out the reaction a 4-saturated-(3S)-3-hydroxyacyl-CoA = a (3E)-enoyl-CoA + H2O. It catalyses the reaction a (3Z)-enoyl-CoA = a 4-saturated (2E)-enoyl-CoA. The enzyme catalyses a (3E)-enoyl-CoA = a 4-saturated (2E)-enoyl-CoA. The polypeptide is Putative fatty acid oxidation complex trifunctional enzyme (Rickettsia felis (strain ATCC VR-1525 / URRWXCal2) (Rickettsia azadi)).